The chain runs to 337 residues: Anthranilate phosphoribosyltransferase (337 aa).

Residues Gly81, 84–85, Ser89, 91–94, 109–117, and Ala121 each bind 5-phospho-alpha-D-ribose 1-diphosphate; these read GD, NVST, and KHGNRAASS. Residue Gly81 participates in anthranilate binding. Position 93 (Ser93) interacts with Mg(2+). Asn112 provides a ligand contact to anthranilate. Arg167 contacts anthranilate. Residues Asp226 and Glu227 each coordinate Mg(2+).

The protein belongs to the anthranilate phosphoribosyltransferase family. In terms of assembly, homodimer. Requires Mg(2+) as cofactor.

The enzyme catalyses N-(5-phospho-beta-D-ribosyl)anthranilate + diphosphate = 5-phospho-alpha-D-ribose 1-diphosphate + anthranilate. It functions in the pathway amino-acid biosynthesis; L-tryptophan biosynthesis; L-tryptophan from chorismate: step 2/5. Catalyzes the transfer of the phosphoribosyl group of 5-phosphorylribose-1-pyrophosphate (PRPP) to anthranilate to yield N-(5'-phosphoribosyl)-anthranilate (PRA). The protein is Anthranilate phosphoribosyltransferase of Methylobacterium nodulans (strain LMG 21967 / CNCM I-2342 / ORS 2060).